We begin with the raw amino-acid sequence, 357 residues long: Protein NDRG2 (357 aa).

A compositionally biased stretch (basic and acidic residues) spans 1-14; that stretch reads MAELREVQITEEKP. Residues 1 to 26 form a disordered region; the sequence is MAELREVQITEEKPLLPGQTPEVAKT. Alanine 2 carries the post-translational modification N-acetylalanine. Position 20 is a phosphothreonine (threonine 20). Residues serine 312 and serine 314 each carry the phosphoserine modification. Threonine 316 is subject to Phosphothreonine. Serine 318 bears the Phosphoserine mark. Threonine 320 bears the Phosphothreonine mark. The disordered stretch occupies residues 320–357; the sequence is TSAASIDGNRSRSRTLSQSSESGTLSSGPPGHTMEVSC. Phosphoserine occurs at positions 321, 324, and 330. Low complexity predominate over residues 333–347; the sequence is RTLSQSSESGTLSSG. Threonine 334 is modified (phosphothreonine). Phosphoserine is present on residues serine 336, serine 338, serine 339, and serine 341. At threonine 343 the chain carries Phosphothreonine. Residue serine 356 is modified to Phosphoserine.

This sequence belongs to the NDRG family. As to quaternary structure, interacts with CTNNB1.

It localises to the cytoplasm. It is found in the perinuclear region. Its subcellular location is the cell projection. The protein resides in the growth cone. In terms of biological role, contributes to the regulation of the Wnt signaling pathway. Down-regulates CTNNB1-mediated transcriptional activation of target genes, such as CCND1, and may thereby act as tumor suppressor. May be involved in dendritic cell and neuron differentiation. In Bos taurus (Bovine), this protein is Protein NDRG2 (NDRG2).